Reading from the N-terminus, the 130-residue chain is Modulator protein MzrA (130 aa).

Topologically, residues 1 to 15 are cytoplasmic; sequence MIAAFIKRHAPQRRL. A helical membrane pass occupies residues 16 to 36; it reads SLWLALPVVALLALVMMPALF. Residues 37 to 130 lie on the Periplasmic side of the membrane; that stretch reads RHDSALQIRA…RISFKPQSIG (94 aa).

Belongs to the MzrA family. As to quaternary structure, interacts with EnvZ.

The protein localises to the cell inner membrane. Functionally, modulates the activity of the EnvZ/OmpR two-component regulatory system, probably by directly modulating EnvZ enzymatic activity and increasing stability of phosphorylated OmpR. This Erwinia tasmaniensis (strain DSM 17950 / CFBP 7177 / CIP 109463 / NCPPB 4357 / Et1/99) protein is Modulator protein MzrA.